A 529-amino-acid polypeptide reads, in one-letter code: Putative inorganic phosphate cotransporter (529 aa).

The next 8 membrane-spanning stretches (helical) occupy residues 37–57, 110–130, 148–168, 202–222, 232–252, 338–358, 429–449, and 466–486; these read FATR…AYVM, YILS…GILA, VFAF…LCAV, AVYA…GLLA, SIFY…LIFV, LPYL…DWMI, FLMS…PIAA, and IVFF…NIFG. Residues 495–529 are disordered; sequence NPEDDEQKPALQTTVTTSPARLSNGSTAPAAISSS. Residues 504 to 529 show a composition bias toward polar residues; sequence ALQTTVTTSPARLSNGSTAPAAISSS.

Belongs to the major facilitator superfamily. Sodium/anion cotransporter family.

The protein localises to the membrane. Its function is as follows. May be an inorganic phosphate cotransporter. In Drosophila melanogaster (Fruit fly), this protein is Putative inorganic phosphate cotransporter (Picot).